Reading from the N-terminus, the 135-residue chain is ATP synthase epsilon chain (135 aa).

This sequence belongs to the ATPase epsilon chain family. In terms of assembly, F-type ATPases have 2 components, CF(1) - the catalytic core - and CF(0) - the membrane proton channel. CF(1) has five subunits: alpha(3), beta(3), gamma(1), delta(1), epsilon(1). CF(0) has three main subunits: a, b and c.

Its subcellular location is the cell inner membrane. Produces ATP from ADP in the presence of a proton gradient across the membrane. The polypeptide is ATP synthase epsilon chain (Rhizobium etli (strain CIAT 652)).